Reading from the N-terminus, the 178-residue chain is MTQLSSKDVPSMGRRQFMNLLTFGTATGVALGALYPVANYFMPLRAGGGGGGTSAKDELGNPITKTGWLATHQAGDRSLVQGLKGDPTYLIVNEGGGIGEFGLNAICTHLGCVVPWDSGANKFICPCHGSQYDTNGKVVRGPAPLSLALAHVDIEDDAVLVKQWSETDFRTNENPWWA.

Residues 20–42 (LLTFGTATGVALGALYPVANYFM) traverse the membrane as a helical segment. Residues 65-161 (KTGWLATHQA…VDIEDDAVLV (97 aa)) form the Rieske domain. Positions 107, 109, 125, and 128 each coordinate [2Fe-2S] cluster. The cysteines at positions 112 and 127 are disulfide-linked.

It belongs to the Rieske iron-sulfur protein family. As to quaternary structure, the 4 large subunits of the cytochrome b6-f complex are cytochrome b6, subunit IV (17 kDa polypeptide, PetD), cytochrome f and the Rieske protein, while the 4 small subunits are PetG, PetL, PetM and PetN. The complex functions as a dimer. [2Fe-2S] cluster serves as cofactor.

Its subcellular location is the cellular thylakoid membrane. The enzyme catalyses 2 oxidized [plastocyanin] + a plastoquinol + 2 H(+)(in) = 2 reduced [plastocyanin] + a plastoquinone + 4 H(+)(out). Component of the cytochrome b6-f complex, which mediates electron transfer between photosystem II (PSII) and photosystem I (PSI), cyclic electron flow around PSI, and state transitions. This Prochlorococcus marinus (strain MIT 9215) protein is Cytochrome b6-f complex iron-sulfur subunit.